The chain runs to 72 residues: Cytochrome c oxidase copper chaperone 2 (72 aa).

Positions 32 and 33 each coordinate Cu cation. A CHCH domain is found at 32–72 (CCACPDTKKLRDECIVEHGESACTKWIEAHILCLRSEGFKV). Short sequence motifs (cx9C motif) lie at residues 35–45 (CPDTKKLRDEC) and 54–64 (CTKWIEAHILC). 2 disulfides stabilise this stretch: Cys35–Cys64 and Cys45–Cys54.

The protein belongs to the COX17 family.

It localises to the mitochondrion intermembrane space. Functionally, copper chaperone for cytochrome c oxidase (COX). Binds 2 copper ions and delivers them to the Cu(A) site of COX. The chain is Cytochrome c oxidase copper chaperone 2 (COX17-2) from Arabidopsis thaliana (Mouse-ear cress).